The sequence spans 280 residues: Tritrans,polycis-undecaprenyl-diphosphate synthase (geranylgeranyl-diphosphate specific) (280 aa).

D57 is an active-site residue. D57 provides a ligand contact to Mg(2+). Substrate is bound by residues 58–61 (GNRR), R70, H74, and 102–104 (STE). N105 functions as the Proton acceptor in the catalytic mechanism. Substrate is bound by residues F106, R108, R229, and 235-237 (RIS). E248 contacts Mg(2+).

The protein belongs to the UPP synthase family. Homodimer. Requires Mg(2+) as cofactor.

The catalysed reaction is geranylgeranyl diphosphate + 7 isopentenyl diphosphate = tri-trans,hepta-cis-undecaprenyl diphosphate + 7 diphosphate. Its function is as follows. Catalyzes the sequential condensation of isopentenyl diphosphate (IPP) with geranylgeranyl diphosphate (GGPP) to yield (2Z,6Z,10Z,14Z,18Z,22Z,26Z,30E,34E,38E)-undecaprenyl diphosphate (tritrans,heptacis-UPP). It is probably the precursor of glycosyl carrier lipids. The protein is Tritrans,polycis-undecaprenyl-diphosphate synthase (geranylgeranyl-diphosphate specific) of Methanocaldococcus jannaschii (strain ATCC 43067 / DSM 2661 / JAL-1 / JCM 10045 / NBRC 100440) (Methanococcus jannaschii).